The chain runs to 127 residues: Fumarate reductase subunit C (127 aa).

3 helical membrane-spanning segments follow: residues 30–50 (ATIL…GCLV), 67–87 (IVVV…QTFF), and 107–127 (IIVL…LVLV).

It belongs to the FrdC family. As to quaternary structure, part of an enzyme complex containing four subunits: a flavoprotein (FrdA), an iron-sulfur protein (FrdB), and two hydrophobic anchor proteins (FrdC and FrdD).

It localises to the cell inner membrane. Its function is as follows. Anchors the catalytic components of the fumarate reductase complex to the cell membrane, binds quinones. The sequence is that of Fumarate reductase subunit C from Photobacterium profundum (strain SS9).